The chain runs to 465 residues: Chromosomal replication initiator protein DnaA (465 aa).

Positions 1 to 80 (MLWTDCLTRL…VEILVDSRPG (80 aa)) are domain I, interacts with DnaA modulators. The interval 80 to 127 (GAILSPAEQPATTTAALSSTPVVPQRVKKEVVEPAATQSNKILNSKKR) is domain II. The interval 128–345 (LLNPLFTFSL…GALNKVVAIA (218 aa)) is domain III, AAA+ region. Residues glycine 173, glycine 175, lysine 176, and threonine 177 each coordinate ATP. Residues 346 to 465 (RFKGSQIDLD…YKNLLRLLQS (120 aa)) form a domain IV, binds dsDNA region.

This sequence belongs to the DnaA family. In terms of assembly, oligomerizes as a right-handed, spiral filament on DNA at oriC.

The protein resides in the cytoplasm. Plays an essential role in the initiation and regulation of chromosomal replication. ATP-DnaA binds to the origin of replication (oriC) to initiate formation of the DNA replication initiation complex once per cell cycle. Binds the DnaA box (a 9 base pair repeat at the origin) and separates the double-stranded (ds)DNA. Forms a right-handed helical filament on oriC DNA; dsDNA binds to the exterior of the filament while single-stranded (ss)DNA is stabiized in the filament's interior. The ATP-DnaA-oriC complex binds and stabilizes one strand of the AT-rich DNA unwinding element (DUE), permitting loading of DNA polymerase. After initiation quickly degrades to an ADP-DnaA complex that is not apt for DNA replication. Binds acidic phospholipids. The sequence is that of Chromosomal replication initiator protein DnaA from Acinetobacter baylyi (strain ATCC 33305 / BD413 / ADP1).